The following is a 97-amino-acid chain: Cell division topological specificity factor (97 aa).

This sequence belongs to the MinE family.

In terms of biological role, prevents the cell division inhibition by proteins MinC and MinD at internal division sites while permitting inhibition at polar sites. This ensures cell division at the proper site by restricting the formation of a division septum at the midpoint of the long axis of the cell. In Synechococcus sp. (strain RCC307), this protein is Cell division topological specificity factor.